A 311-amino-acid chain; its full sequence is Malate dehydrogenase (311 aa).

NAD(+) contacts are provided by residues 7–13 (GAAGGIG) and aspartate 34. The substrate site is built by arginine 81 and arginine 87. NAD(+)-binding positions include asparagine 94 and 117–119 (ITN). 2 residues coordinate substrate: asparagine 119 and arginine 153. Histidine 177 acts as the Proton acceptor in catalysis. Position 227 (methionine 227) interacts with NAD(+).

It belongs to the LDH/MDH superfamily. MDH type 1 family. Homodimer.

It catalyses the reaction (S)-malate + NAD(+) = oxaloacetate + NADH + H(+). Catalyzes the reversible oxidation of malate to oxaloacetate. This Shewanella woodyi (strain ATCC 51908 / MS32) protein is Malate dehydrogenase.